The sequence spans 412 residues: Serine/threonine transporter SstT (412 aa).

10 helical membrane-spanning segments follow: residues 16–36, 44–64, 82–102, 115–135, 141–161, 179–199, 217–237, 298–318, 330–350, and 357–377; these read LVAQ…FLPG, LGDL…FVLV, IIVL…LASF, TDVI…FNIV, ALLN…GFAF, VTLI…GLVA, LLVL…LIVF, MGGA…TLGI, LLAA…LLLI, and FGIS…IGVV.

Belongs to the dicarboxylate/amino acid:cation symporter (DAACS) (TC 2.A.23) family.

It localises to the cell inner membrane. It catalyses the reaction L-serine(in) + Na(+)(in) = L-serine(out) + Na(+)(out). The catalysed reaction is L-threonine(in) + Na(+)(in) = L-threonine(out) + Na(+)(out). Its function is as follows. Involved in the import of serine and threonine into the cell, with the concomitant import of sodium (symport system). The chain is Serine/threonine transporter SstT from Stutzerimonas stutzeri (strain A1501) (Pseudomonas stutzeri).